The following is a 285-amino-acid chain: BAG family molecular chaperone regulator 2 (285 aa).

The 77-residue stretch at 37-113 (RGIRVRVKYG…LILIEDPISQ (77 aa)) folds into the Ubiquitin-like domain. The BAG domain occupies 132-210 (AISDISFQVE…KYVEALDLLK (79 aa)). Ser244 is modified (phosphoserine).

In terms of assembly, binds to the ATPase domain of HSP70/HSC70 chaperones.

Functionally, co-chaperone that regulates diverse cellular pathways, such as programmed cell death and stress responses. The chain is BAG family molecular chaperone regulator 2 (BAG2) from Arabidopsis thaliana (Mouse-ear cress).